Consider the following 146-residue polypeptide: 3-hydroxyacyl-[acyl-carrier-protein] dehydratase FabZ (146 aa).

Residue His-48 is part of the active site.

Belongs to the thioester dehydratase family. FabZ subfamily.

The protein localises to the cytoplasm. The enzyme catalyses a (3R)-hydroxyacyl-[ACP] = a (2E)-enoyl-[ACP] + H2O. Involved in unsaturated fatty acids biosynthesis. Catalyzes the dehydration of short chain beta-hydroxyacyl-ACPs and long chain saturated and unsaturated beta-hydroxyacyl-ACPs. The protein is 3-hydroxyacyl-[acyl-carrier-protein] dehydratase FabZ of Teredinibacter turnerae (strain ATCC 39867 / T7901).